Consider the following 121-residue polypeptide: Large ribosomal subunit protein uL22c (121 aa).

This sequence belongs to the universal ribosomal protein uL22 family. Part of the 50S ribosomal subunit.

It localises to the plastid. The protein resides in the chloroplast. In terms of biological role, this protein binds specifically to 23S rRNA. Functionally, the globular domain of the protein is located near the polypeptide exit tunnel on the outside of the subunit, while an extended beta-hairpin is found that lines the wall of the exit tunnel in the center of the 70S ribosome. The protein is Large ribosomal subunit protein uL22c (rpl22) of Welwitschia mirabilis (Tree tumbo).